Reading from the N-terminus, the 352-residue chain is Biotin synthase (352 aa).

The region spanning 44 to 262 (NRVQVSTLLS…LAVARIMMPK (219 aa)) is the Radical SAM core domain. Residues C59, C63, and C66 each contribute to the [4Fe-4S] cluster site. Residues C103, C134, C194, and R266 each contribute to the [2Fe-2S] cluster site.

Belongs to the radical SAM superfamily. Biotin synthase family. In terms of assembly, homodimer. It depends on [4Fe-4S] cluster as a cofactor. [2Fe-2S] cluster is required as a cofactor.

It catalyses the reaction (4R,5S)-dethiobiotin + (sulfur carrier)-SH + 2 reduced [2Fe-2S]-[ferredoxin] + 2 S-adenosyl-L-methionine = (sulfur carrier)-H + biotin + 2 5'-deoxyadenosine + 2 L-methionine + 2 oxidized [2Fe-2S]-[ferredoxin]. It participates in cofactor biosynthesis; biotin biosynthesis; biotin from 7,8-diaminononanoate: step 2/2. In terms of biological role, catalyzes the conversion of dethiobiotin (DTB) to biotin by the insertion of a sulfur atom into dethiobiotin via a radical-based mechanism. This Pseudomonas aeruginosa (strain UCBPP-PA14) protein is Biotin synthase.